A 432-amino-acid polypeptide reads, in one-letter code: Peptidase B (432 aa).

Mn(2+) is bound by residues Lys196 and Asp201. The active site involves Lys208. Mn(2+) is bound by residues Asp219, Asp278, and Glu280. Arg282 is an active-site residue.

Belongs to the peptidase M17 family. In terms of assembly, homohexamer. It depends on Mn(2+) as a cofactor.

It is found in the cytoplasm. The enzyme catalyses Release of an N-terminal amino acid, Xaa, from a peptide or arylamide. Xaa is preferably Glu or Asp but may be other amino acids, including Leu, Met, His, Cys and Gln.. In terms of biological role, probably plays an important role in intracellular peptide degradation. This chain is Peptidase B, found in Vibrio vulnificus (strain CMCP6).